A 191-amino-acid chain; its full sequence is UPF0312 protein Pmen_0419 (191 aa).

An N-terminal signal peptide occupies residues 1-22; sequence MLKNALAALVLGSALIGGQAMA.

It belongs to the UPF0312 family. Type 1 subfamily.

It is found in the periplasm. The chain is UPF0312 protein Pmen_0419 from Ectopseudomonas mendocina (strain ymp) (Pseudomonas mendocina).